The primary structure comprises 390 residues: MYLKHLHLRQFRNYRDQQVKFDGAKTILLGDNAQGKSNLLESVELLSTLKSHRAIRDRDLILDSKQASKIQASLERQLGNIDLALTLRSQGKRTVAVNGETISRHLDFLSILNVVHFSSLDLDLVRGGPEVRRYWLDRLLVQLEPVYAHILLQYNQVLRQRNALLKKIRQQKMAAETTGSSPSILTQELALWDAQLATTGSRVIRRRQRLLQKLAPLAGEWHCAISGSMEVFKMEYLANVIVDSNELIIQDSLEGVRQAFLEKIKVRAIAEQYQGTTVVGPHRDDVIFTINDTPARQYGSQGQQRTLVLALKLAELQLIEEVVQEPPLLLLDDVLAELDLHRQNQLLEAISNRFQTLITTTHLGCFDGQWLQDTQILSVKSGNISSFLDF.

30–37 contributes to the ATP binding site; it reads GDNAQGKS.

It belongs to the RecF family.

The protein resides in the cytoplasm. Its function is as follows. The RecF protein is involved in DNA metabolism; it is required for DNA replication and normal SOS inducibility. RecF binds preferentially to single-stranded, linear DNA. It also seems to bind ATP. The polypeptide is DNA replication and repair protein RecF (Trichodesmium erythraeum (strain IMS101)).